Consider the following 293-residue polypeptide: Small ribosomal subunit protein uS5 (293 aa).

The tract at residues 1 to 56 (MADDAGAAGGPGGPGGPGMGGRGGFRGGFGSGVRGRGRGRGRGRGRGRGARGGKAE) is disordered. A2 carries the post-translational modification N-acetylalanine. Over residues 7 to 34 (AAGGPGGPGGPGMGGRGGFRGGFGSGVR) the composition is skewed to gly residues. Residues 35–51 (GRGRGRGRGRGRGRGAR) are compositionally biased toward basic residues. Residues K54 and K58 each participate in a glycyl lysine isopeptide (Lys-Gly) (interchain with G-Cter in ubiquitin) cross-link. The region spanning 102-165 (LKDEVLKIMP…ILAKLSIVPV (64 aa)) is the S5 DRBM domain. T252 carries the post-translational modification Phosphothreonine. The residue at position 263 (K263) is an N6-acetyllysine. The residue at position 264 (S264) is a Phosphoserine. T270 carries the post-translational modification Phosphothreonine. K275 carries the post-translational modification N6-acetyllysine; alternate. A Glycyl lysine isopeptide (Lys-Gly) (interchain with G-Cter in SUMO1); alternate cross-link involves residue K275. A Glycyl lysine isopeptide (Lys-Gly) (interchain with G-Cter in SUMO2); alternate cross-link involves residue K275. Residue K275 forms a Glycyl lysine isopeptide (Lys-Gly) (interchain with G-Cter in ubiquitin); alternate linkage. Phosphoserine is present on S281.

It belongs to the universal ribosomal protein uS5 family. Component of the small ribosomal subunit. Interacts with zinc finger protein ZNF277 (via zinc-finger domains); the interaction is direct; the interaction is extra-ribosomal. Interaction with ZNF277 competes with the binding of RPS2 to protein arginine methyltransferase PRMT3. Post-translationally, citrullinated by PADI4 in the Arg/Gly-rich region. Asymmetric arginine dimethylation by PRMT3 occurs at multiple sites in the Arg/Gly-rich region. In terms of processing, monoubiquitinated at Lys-54 and Lys-58 by RNF10 when a ribosome has stalled during translation, leading to its degradation by the proteasome. Deubiquitinated at Lys-54 and Lys-58 by USP10, preventing degradation by the proteasome and promoting 40S ribosome subunit recycling following ribosome dissociation.

It is found in the cytoplasm. The protein resides in the nucleus. The protein localises to the nucleolus. In terms of biological role, component of the ribosome, a large ribonucleoprotein complex responsible for the synthesis of proteins in the cell. The small ribosomal subunit (SSU) binds messenger RNAs (mRNAs) and translates the encoded message by selecting cognate aminoacyl-transfer RNA (tRNA) molecules. The large subunit (LSU) contains the ribosomal catalytic site termed the peptidyl transferase center (PTC), which catalyzes the formation of peptide bonds, thereby polymerizing the amino acids delivered by tRNAs into a polypeptide chain. The nascent polypeptides leave the ribosome through a tunnel in the LSU and interact with protein factors that function in enzymatic processing, targeting, and the membrane insertion of nascent chains at the exit of the ribosomal tunnel. Plays a role in the assembly and function of the 40S ribosomal subunit. Mutations in this protein affects the control of translational fidelity. Involved in nucleolar processing of pre-18S ribosomal RNA and ribosome assembly. The polypeptide is Small ribosomal subunit protein uS5 (RPS2) (Bos taurus (Bovine)).